The following is a 386-amino-acid chain: Probable mannan endo-1,4-beta-mannosidase A (386 aa).

An N-terminal signal peptide occupies residues 1-21 (MKLNPSLLTAAGLVSAQLASA). Substrate contacts are provided by tryptophan 95 and asparagine 207. Glutamate 208 acts as the Proton donor in catalysis. A substrate-binding site is contributed by tyrosine 283. Catalysis depends on glutamate 316, which acts as the Nucleophile. Asparagine 336 is a glycosylation site (N-linked (GlcNAc...) asparagine). Residue tryptophan 346 coordinates substrate.

It belongs to the glycosyl hydrolase 5 (cellulase A) family.

It localises to the secreted. The catalysed reaction is Random hydrolysis of (1-&gt;4)-beta-D-mannosidic linkages in mannans, galactomannans and glucomannans.. In terms of biological role, endo-1,4-mannanase, a crucial enzyme for depolymerization of seed galactomannans and wood galactoglucomannans. This is Probable mannan endo-1,4-beta-mannosidase A (manA) from Aspergillus oryzae (strain ATCC 42149 / RIB 40) (Yellow koji mold).